The chain runs to 953 residues: Translation initiation factor IF-2 (953 aa).

Disordered stretches follow at residues 48–240 and 279–363; these read SSFS…AQQE and TKLK…TERK. Composition is skewed to basic and acidic residues over residues 80–89, 98–111, and 140–188; these read TGSEHVEKTQ, FKAE…EQAA, and QGDK…ENHK. A compositionally biased stretch (polar residues) spans 191–207; the sequence is RFTNQKKQGRQEPQSKS. Residues 229–240 show a composition bias toward basic and acidic residues; sequence RQSETRFRAQQE. Residues 282-291 are compositionally biased toward polar residues; that stretch reads KSSNISAKST. Basic and acidic residues predominate over residues 300-317; it reads ARPEKNRELTHHSQEGQK. Positions 322–338 are enriched in low complexity; sequence SWNSQNQVRNQKNSNWN. Over residues 339–348 the composition is skewed to basic residues; it reads KNKKTKKGKN. The tr-type G domain occupies 454-623; it reads ERAPVVTIMG…LLVAEVEELK (170 aa). The segment at 463 to 470 is G1; the sequence is GHVDHGKT. 463-470 serves as a coordination point for GTP; the sequence is GHVDHGKT. The G2 stretch occupies residues 488-492; it reads GITQH. The segment at 509-512 is G3; sequence DTPG. GTP is bound by residues 509 to 513 and 563 to 566; these read DTPGH and NKID. The segment at 563 to 566 is G4; it reads NKID. The segment at 599-601 is G5; it reads SAK.

It belongs to the TRAFAC class translation factor GTPase superfamily. Classic translation factor GTPase family. IF-2 subfamily.

It is found in the cytoplasm. In terms of biological role, one of the essential components for the initiation of protein synthesis. Protects formylmethionyl-tRNA from spontaneous hydrolysis and promotes its binding to the 30S ribosomal subunits. Also involved in the hydrolysis of GTP during the formation of the 70S ribosomal complex. The sequence is that of Translation initiation factor IF-2 from Streptococcus pyogenes serotype M1.